Here is a 705-residue protein sequence, read N- to C-terminus: Fatty acid oxidation complex subunit alpha (705 aa).

An enoyl-CoA hydratase region spans residues 1-188 (MGKTFNLTRR…KMGLVNDVVP (188 aa)). The interval 308–705 (RKVKKAVILG…AMAAEKARFF (398 aa)) is 3-hydroxyacyl-CoA dehydrogenase.

It in the N-terminal section; belongs to the enoyl-CoA hydratase/isomerase family. This sequence in the central section; belongs to the 3-hydroxyacyl-CoA dehydrogenase family. Heterotetramer of two alpha chains (FadJ) and two beta chains (FadI).

Its subcellular location is the cytoplasm. It catalyses the reaction a (3S)-3-hydroxyacyl-CoA = a (2E)-enoyl-CoA + H2O. It carries out the reaction a 4-saturated-(3S)-3-hydroxyacyl-CoA = a (3E)-enoyl-CoA + H2O. The catalysed reaction is a (3S)-3-hydroxyacyl-CoA + NAD(+) = a 3-oxoacyl-CoA + NADH + H(+). The enzyme catalyses (3S)-3-hydroxybutanoyl-CoA = (3R)-3-hydroxybutanoyl-CoA. The protein operates within lipid metabolism; fatty acid beta-oxidation. In terms of biological role, catalyzes the formation of a hydroxyacyl-CoA by addition of water on enoyl-CoA. Also exhibits 3-hydroxyacyl-CoA epimerase and 3-hydroxyacyl-CoA dehydrogenase activities. The chain is Fatty acid oxidation complex subunit alpha from Shewanella oneidensis (strain ATCC 700550 / JCM 31522 / CIP 106686 / LMG 19005 / NCIMB 14063 / MR-1).